The sequence spans 387 residues: tRNA-specific 2-thiouridylase MnmA (387 aa).

ATP contacts are provided by residues A6–S13 and L32. The Nucleophile role is filled by C101. An intrachain disulfide couples C101 to C199. G125 contributes to the ATP binding site. The tract at residues K148–Q150 is interaction with tRNA. C199 (cysteine persulfide intermediate) is an active-site residue.

This sequence belongs to the MnmA/TRMU family.

The protein localises to the cytoplasm. The catalysed reaction is S-sulfanyl-L-cysteinyl-[protein] + uridine(34) in tRNA + AH2 + ATP = 2-thiouridine(34) in tRNA + L-cysteinyl-[protein] + A + AMP + diphosphate + H(+). Catalyzes the 2-thiolation of uridine at the wobble position (U34) of tRNA, leading to the formation of s(2)U34. This chain is tRNA-specific 2-thiouridylase MnmA, found in Clavibacter michiganensis subsp. michiganensis (strain NCPPB 382).